The chain runs to 100 residues: Integration host factor subunit alpha (100 aa).

The tract at residues 54-73 (DLRDKRQRPGRNPKTGEEIP) is disordered.

Belongs to the bacterial histone-like protein family. In terms of assembly, heterodimer of an alpha and a beta chain.

Its function is as follows. This protein is one of the two subunits of integration host factor, a specific DNA-binding protein that functions in genetic recombination as well as in transcriptional and translational control. This Pseudomonas savastanoi pv. phaseolicola (strain 1448A / Race 6) (Pseudomonas syringae pv. phaseolicola (strain 1448A / Race 6)) protein is Integration host factor subunit alpha.